Here is an 85-residue protein sequence, read N- to C-terminus: Small ribosomal subunit protein uS17 (85 aa).

This sequence belongs to the universal ribosomal protein uS17 family. Part of the 30S ribosomal subunit.

Functionally, one of the primary rRNA binding proteins, it binds specifically to the 5'-end of 16S ribosomal RNA. This Agathobacter rectalis (strain ATCC 33656 / DSM 3377 / JCM 17463 / KCTC 5835 / VPI 0990) (Eubacterium rectale) protein is Small ribosomal subunit protein uS17.